Consider the following 247-residue polypeptide: Ribosomal RNA small subunit methyltransferase G (247 aa).

Residues Gly-84, Phe-89, 136 to 137 (AE), and Arg-155 contribute to the S-adenosyl-L-methionine site.

It belongs to the methyltransferase superfamily. RNA methyltransferase RsmG family.

The protein resides in the cytoplasm. Its function is as follows. Specifically methylates the N7 position of a guanine in 16S rRNA. The polypeptide is Ribosomal RNA small subunit methyltransferase G (Prochlorococcus marinus (strain MIT 9313)).